The sequence spans 66 residues: KEGYLVELGTGCKYECFKLGDNDYCLRECKAKYGKGAGGYCYAFGCWCTHLYEQAVVWPLKNKTCK.

One can recognise an LCN-type CS-alpha/beta domain in the interval 1–66; sequence KEGYLVELGT…VWPLKNKTCK (66 aa). Intrachain disulfides connect Cys-12–Cys-65, Cys-16–Cys-41, Cys-25–Cys-46, and Cys-29–Cys-48.

The protein belongs to the long (4 C-C) scorpion toxin superfamily. Sodium channel inhibitor family. Beta subfamily. In terms of tissue distribution, expressed by the venom gland.

The protein resides in the secreted. Its function is as follows. Beta toxins bind voltage-independently at site-4 of sodium channels (Nav) and shift the voltage of activation toward more negative potentials thereby affecting sodium channel activation and promoting spontaneous and repetitive firing. Acts on human sodium channel Nav1.6/SCN8A. Also able to weakly shift the activation curves of human Nav1.2/SCN2A and Nav1.4/SCN4A. In Centruroides huichol (Scorpion), this protein is Beta-toxin Chui4.